The primary structure comprises 352 residues: Selenide, water dikinase (352 aa).

The active site involves Cys23. Residues Lys26 and 54–56 (SRD) contribute to the ATP site. Asp57 contributes to the Mg(2+) binding site. Residues Asp74, Asp97, and 145–147 (GHS) each bind ATP. Position 97 (Asp97) interacts with Mg(2+). Mg(2+) is bound at residue Asp233.

It belongs to the selenophosphate synthase 1 family. Class I subfamily. In terms of assembly, homodimer. It depends on Mg(2+) as a cofactor.

It catalyses the reaction hydrogenselenide + ATP + H2O = selenophosphate + AMP + phosphate + 2 H(+). Its function is as follows. Synthesizes selenophosphate from selenide and ATP. In Shewanella putrefaciens (strain CN-32 / ATCC BAA-453), this protein is Selenide, water dikinase.